The following is a 547-amino-acid chain: MSLVESPPWQALKSKYQELSSLHMRDFFAQDKKRGTRLSLEAAGLYFDYSKNRVDEKTIDLLCESANACNLPLRIEQLFSGKLTNESGEMVGFHTALRQVNNFSFKTNNNAIQEIHASWEKIKKLSIRIREGDYKGFTNKSITDIVNIGIGGSSLGPQMAYNALKPYVKAPLRCHFISNLDDTDFYETVRTLNPETTLFIITSKTFTTKETLENARRATEWLMQAAKKENLIQTHFMAVTAAPEKAHEFGIQKDNIFMLWPWVGGRFSVWSAAGLSLAIAIGWEEFFEFLRGAHAMDTHFRQAEFNKNMPILLALLSIWYINFFHAKTQAIIPYSQRLVYLPDYLTQLHMESLGKSVQLDGSAVHWQTGAVVWGDLGTNSQHSFHQLFLQGTMVIPVDFIAVLKNSRESHWQLPLIANCLGQSQTLMEGYDKEGVMRDLINQGIEHEKAEKLATYRLIRGNNPSNTIILEELNPYSLGSLLALYEHKVYVQSVIWNINPFDQWGVERGKHLAKDILQALQAETDQSSFDSSTERLINYVLKIKGNRP.

The Proton donor role is filled by glutamate 351. Catalysis depends on residues histidine 382 and lysine 509.

The protein belongs to the GPI family.

The protein resides in the cytoplasm. The enzyme catalyses alpha-D-glucose 6-phosphate = beta-D-fructose 6-phosphate. Its pathway is carbohydrate biosynthesis; gluconeogenesis. It participates in carbohydrate degradation; glycolysis; D-glyceraldehyde 3-phosphate and glycerone phosphate from D-glucose: step 2/4. Its function is as follows. Catalyzes the reversible isomerization of glucose-6-phosphate to fructose-6-phosphate. The chain is Glucose-6-phosphate isomerase from Coxiella burnetii (strain RSA 493 / Nine Mile phase I).